The sequence spans 1024 residues: Beta-galactosidase (1024 aa).

Residues N103 and D202 each coordinate substrate. Residue D202 coordinates Na(+). Positions 417, 419, and 462 each coordinate Mg(2+). Substrate contacts are provided by residues E462 and 538–541; that span reads EYAH. The active-site Proton donor is the E462. E538 acts as the Nucleophile in catalysis. Position 598 (N598) interacts with Mg(2+). Residues F602 and N605 each contribute to the Na(+) site. Residues N605 and W1000 each contribute to the substrate site.

The protein belongs to the glycosyl hydrolase 2 family. In terms of assembly, homotetramer. Mg(2+) is required as a cofactor. The cofactor is Na(+).

It carries out the reaction Hydrolysis of terminal non-reducing beta-D-galactose residues in beta-D-galactosides.. The chain is Beta-galactosidase from Escherichia coli (strain SMS-3-5 / SECEC).